The primary structure comprises 369 residues: S-(hydroxymethyl)glutathione dehydrogenase (369 aa).

Residues cysteine 40, histidine 62, cysteine 92, cysteine 95, cysteine 98, cysteine 106, and cysteine 169 each contribute to the Zn(2+) site.

Belongs to the zinc-containing alcohol dehydrogenase family. Class-III subfamily. As to quaternary structure, homodimer. Zn(2+) serves as cofactor.

The protein resides in the cytoplasm. The enzyme catalyses S-(hydroxymethyl)glutathione + NADP(+) = S-formylglutathione + NADPH + H(+). It carries out the reaction S-(hydroxymethyl)glutathione + NAD(+) = S-formylglutathione + NADH + H(+). The catalysed reaction is a primary alcohol + NAD(+) = an aldehyde + NADH + H(+). It catalyses the reaction a secondary alcohol + NAD(+) = a ketone + NADH + H(+). The enzyme catalyses S-nitrosoglutathione + NADH + H(+) = S-(hydroxysulfenamide)glutathione + NAD(+). Functionally, has high formaldehyde dehydrogenase activity in the presence of glutathione and catalyzes the oxidation of normal alcohols in a reaction that is not GSH-dependent. In addition, hemithiolacetals other than those formed from GSH, including omega-thiol fatty acids, also are substrates. Also acts as a S-nitroso-glutathione reductase by catalyzing the NADH-dependent reduction of S-nitrosoglutathione. The sequence is that of S-(hydroxymethyl)glutathione dehydrogenase (frmA) from Escherichia coli O1:K1 / APEC.